The following is a 196-amino-acid chain: Gastrula zinc finger protein XlCGF64.1 (196 aa).

C2H2-type zinc fingers lie at residues 6–28, 34–56, 62–84, 90–112, 118–140, 146–168, and 174–196; these read YECPECGKTFKYKNSLTIHQRGH, FMCTQCGKCFRQKKALRRHQFIH, YVCTECEKRFLEKSQLILHQRGH, FTCTECGESFRHKQVLMRHQFIH, YECTQCGEGFLLKSKLIHHQRGH, FMCTECGKGFRQKQVLIEHQFIH, and LMCTDCGKHFRQKHVLRLHKLSH.

It belongs to the krueppel C2H2-type zinc-finger protein family.

It is found in the nucleus. May be involved in transcriptional regulation. The polypeptide is Gastrula zinc finger protein XlCGF64.1 (Xenopus laevis (African clawed frog)).